The following is a 262-amino-acid chain: Glucosamine-6-phosphate deaminase (262 aa).

Asp-63 acts as the Proton acceptor; for enolization step in catalysis. The For ring-opening step role is filled by Asn-129. The active-site Proton acceptor; for ring-opening step is the His-131. Glu-136 (for ring-opening step) is an active-site residue.

The protein belongs to the glucosamine/galactosamine-6-phosphate isomerase family. NagB subfamily.

It catalyses the reaction alpha-D-glucosamine 6-phosphate + H2O = beta-D-fructose 6-phosphate + NH4(+). The protein operates within amino-sugar metabolism; N-acetylneuraminate degradation; D-fructose 6-phosphate from N-acetylneuraminate: step 5/5. Its function is as follows. Catalyzes the reversible isomerization-deamination of glucosamine 6-phosphate (GlcN6P) to form fructose 6-phosphate (Fru6P) and ammonium ion. This is Glucosamine-6-phosphate deaminase from Bacillus cereus (strain G9842).